Reading from the N-terminus, the 293-residue chain is Ribosomal protein L11 methyltransferase (293 aa).

T145, G166, D188, and N230 together coordinate S-adenosyl-L-methionine.

It belongs to the methyltransferase superfamily. PrmA family.

Its subcellular location is the cytoplasm. It carries out the reaction L-lysyl-[protein] + 3 S-adenosyl-L-methionine = N(6),N(6),N(6)-trimethyl-L-lysyl-[protein] + 3 S-adenosyl-L-homocysteine + 3 H(+). In terms of biological role, methylates ribosomal protein L11. The polypeptide is Ribosomal protein L11 methyltransferase (Edwardsiella ictaluri (strain 93-146)).